The chain runs to 107 residues: Iron-sulfur cluster assembly protein CyaY (107 aa).

This sequence belongs to the frataxin family.

Its function is as follows. Involved in iron-sulfur (Fe-S) cluster assembly. May act as a regulator of Fe-S biogenesis. The polypeptide is Iron-sulfur cluster assembly protein CyaY (Edwardsiella ictaluri (strain 93-146)).